Consider the following 105-residue polypeptide: Small ribosomal subunit protein uS10c (105 aa).

This sequence belongs to the universal ribosomal protein uS10 family. Part of the 30S ribosomal subunit.

The protein localises to the plastid. Its subcellular location is the cyanelle. Functionally, involved in the binding of tRNA to the ribosomes. The sequence is that of Small ribosomal subunit protein uS10c (rps10) from Cyanophora paradoxa.